A 255-amino-acid chain; its full sequence is Small ribosomal subunit protein eS1 (255 aa).

Ala2 is modified (N-acetylalanine; partial).

Belongs to the eukaryotic ribosomal protein eS1 family. Component of the small ribosomal subunit. Mature ribosomes consist of a small (40S) and a large (60S) subunit. The 40S subunit contains about 33 different proteins and 1 molecule of RNA (18S). The 60S subunit contains about 49 different proteins and 3 molecules of RNA (25S, 5.8S and 5S).

It localises to the cytoplasm. The polypeptide is Small ribosomal subunit protein eS1 (Yarrowia lipolytica (strain CLIB 122 / E 150) (Yeast)).